We begin with the raw amino-acid sequence, 224 residues long: Phosphoribosylformylglycinamidine synthase subunit PurQ (224 aa).

The Glutamine amidotransferase type-1 domain occupies Arg-4–Ser-224. Cys-87 (nucleophile) is an active-site residue. Catalysis depends on residues His-195 and Glu-197.

Part of the FGAM synthase complex composed of 1 PurL, 1 PurQ and 2 PurS subunits.

It is found in the cytoplasm. The enzyme catalyses N(2)-formyl-N(1)-(5-phospho-beta-D-ribosyl)glycinamide + L-glutamine + ATP + H2O = 2-formamido-N(1)-(5-O-phospho-beta-D-ribosyl)acetamidine + L-glutamate + ADP + phosphate + H(+). It catalyses the reaction L-glutamine + H2O = L-glutamate + NH4(+). Its pathway is purine metabolism; IMP biosynthesis via de novo pathway; 5-amino-1-(5-phospho-D-ribosyl)imidazole from N(2)-formyl-N(1)-(5-phospho-D-ribosyl)glycinamide: step 1/2. Functionally, part of the phosphoribosylformylglycinamidine synthase complex involved in the purines biosynthetic pathway. Catalyzes the ATP-dependent conversion of formylglycinamide ribonucleotide (FGAR) and glutamine to yield formylglycinamidine ribonucleotide (FGAM) and glutamate. The FGAM synthase complex is composed of three subunits. PurQ produces an ammonia molecule by converting glutamine to glutamate. PurL transfers the ammonia molecule to FGAR to form FGAM in an ATP-dependent manner. PurS interacts with PurQ and PurL and is thought to assist in the transfer of the ammonia molecule from PurQ to PurL. The sequence is that of Phosphoribosylformylglycinamidine synthase subunit PurQ from Mycobacterium leprae (strain TN).